A 255-amino-acid chain; its full sequence is tRNA (guanine-N(7)-)-methyltransferase (255 aa).

S-adenosyl-L-methionine-binding residues include glutamate 86, glutamate 111, aspartate 138, and aspartate 161. Aspartate 161 is a catalytic residue. Residues lysine 165, aspartate 197, and 234–237 contribute to the substrate site; that span reads TKFE.

It belongs to the class I-like SAM-binding methyltransferase superfamily. TrmB family.

The catalysed reaction is guanosine(46) in tRNA + S-adenosyl-L-methionine = N(7)-methylguanosine(46) in tRNA + S-adenosyl-L-homocysteine. The protein operates within tRNA modification; N(7)-methylguanine-tRNA biosynthesis. In terms of biological role, catalyzes the formation of N(7)-methylguanine at position 46 (m7G46) in tRNA. The protein is tRNA (guanine-N(7)-)-methyltransferase of Pasteurella multocida (strain Pm70).